The primary structure comprises 57 residues: DNA-directed RNA polymerase subunit Rpo6 (57 aa).

The protein belongs to the archaeal Rpo6/eukaryotic RPB6 RNA polymerase subunit family. As to quaternary structure, part of the RNA polymerase complex.

It localises to the cytoplasm. It carries out the reaction RNA(n) + a ribonucleoside 5'-triphosphate = RNA(n+1) + diphosphate. Functionally, DNA-dependent RNA polymerase (RNAP) catalyzes the transcription of DNA into RNA using the four ribonucleoside triphosphates as substrates. The chain is DNA-directed RNA polymerase subunit Rpo6 from Pyrococcus furiosus (strain ATCC 43587 / DSM 3638 / JCM 8422 / Vc1).